Reading from the N-terminus, the 450-residue chain is Akuammiline synthase 2 (450 aa).

The Proton acceptor role is filled by H154. The Nuclear localization signal motif lies at 218 to 225; it reads MRRFVFDA. D376 functions as the Proton acceptor in the catalytic mechanism.

The protein belongs to the plant acyltransferase family. Monomer.

The protein resides in the cytoplasm. The protein localises to the nucleus. The enzyme catalyses rhazimol + acetyl-CoA = akuammiline + CoA + H(+). It functions in the pathway alkaloid biosynthesis. Its function is as follows. Acyltransferase involved in the biosynthesis of akuammilan monoterpene indole alkaloids (MIAs) natural products, components with various biological properties such as antidiabetic, antibacterial, anti-inflammatory, anticancer, and antimalarial activities. Catalyzes the conversion of rhazimol to akuammiline. The protein is Akuammiline synthase 2 of Alstonia scholaris (Dogbane).